The chain runs to 200 residues: Glutathione peroxidase 1 (200 aa).

At Ser31 the chain carries Phosphoserine. Sec46 is an active-site residue. Sec46 is a non-standard amino acid (selenocysteine). Residues Lys85 and Lys111 each carry the N6-acetyllysine; alternate modification. Residues Lys85 and Lys111 each carry the N6-succinyllysine; alternate modification. Position 118 is an N6-acetyllysine (Lys118). Position 145 is an N6-acetyllysine; alternate (Lys145). Lys145 carries the N6-succinyllysine; alternate modification. Ser194 carries the phosphoserine modification.

The protein belongs to the glutathione peroxidase family. In terms of assembly, homotetramer. Interacts with MIEN1. During periods of oxidative stress, Sec-46 may react with a superoxide radical, irreversibly lose hydroselenide and be converted to dehydroalanine.

The protein localises to the cytoplasm. Its subcellular location is the mitochondrion. It catalyses the reaction 2 glutathione + H2O2 = glutathione disulfide + 2 H2O. The catalysed reaction is a hydroperoxy polyunsaturated fatty acid + 2 glutathione = a hydroxy polyunsaturated fatty acid + glutathione disulfide + H2O. It carries out the reaction tert-butyl hydroperoxide + 2 glutathione = tert-butanol + glutathione disulfide + H2O. The enzyme catalyses cumene hydroperoxide + 2 glutathione = 2-phenylpropan-2-ol + glutathione disulfide + H2O. It catalyses the reaction (13S)-hydroperoxy-(9Z,11E)-octadecadienoate + 2 glutathione = (13S)-hydroxy-(9Z,11E)-octadecadienoate + glutathione disulfide + H2O. The catalysed reaction is (9S)-hydroperoxy-(10E,12Z)-octadecadienoate + 2 glutathione = (9S)-hydroxy-(10E,12Z)-octadecadienoate + glutathione disulfide + H2O. It carries out the reaction (5S)-hydroperoxy-(6E,8Z,11Z,14Z)-eicosatetraenoate + 2 glutathione = (5S)-hydroxy-(6E,8Z,11Z,14Z)-eicosatetraenoate + glutathione disulfide + H2O. The enzyme catalyses (12S)-hydroperoxy-(5Z,8Z,10E,14Z)-eicosatetraenoate + 2 glutathione = (12S)-hydroxy-(5Z,8Z,10E,14Z)-eicosatetraenoate + glutathione disulfide + H2O. It catalyses the reaction (12R)-hydroperoxy-(5Z,8Z,10E,14Z)-eicosatetraenoate + 2 glutathione = (12R)-hydroxy-(5Z,8Z,10E,14Z)-eicosatetraenoate + glutathione disulfide + H2O. The catalysed reaction is (15S)-hydroperoxy-(5Z,8Z,11Z,13E)-eicosatetraenoate + 2 glutathione = (15S)-hydroxy-(5Z,8Z,11Z,13E)-eicosatetraenoate + glutathione disulfide + H2O. It carries out the reaction (5S)-hydroperoxy-(6E,8Z,11Z,14Z,17Z)-eicosapentaenoate + 2 glutathione = (5S)-hydroxy-(6E,8Z,11Z,14Z,17Z)-eicosapentaenoate + glutathione disulfide + H2O. The enzyme catalyses (12S)-hydroperoxy-(5Z,8Z,10E,14Z,17Z)-eicosapentaenoate + 2 glutathione = (12S)-hydroxy-(5Z,8Z,10E,14Z,17Z)-eicosapentaenoate + glutathione disulfide + H2O. It catalyses the reaction (15S)-hydroperoxy-(5Z,8Z,11Z,13E,17Z)-eicosapentaenoate + 2 glutathione = (15S)-hydroxy-(5Z,8Z,11Z,13E,17Z)-eicosapentaenoate + glutathione disulfide + H2O. The catalysed reaction is (15S)-hydroperoxy-(11Z,13E)-eicosadienoate + 2 glutathione = (15S)-hydroxy-(11Z,13E)-eicosadienoate + glutathione disulfide + H2O. It carries out the reaction (17S)-hydroperoxy-(4Z,7Z,10Z,13Z,15E,19Z)-docosahexaenoate + 2 glutathione = (17S)-hydroxy-(4Z,7Z,10Z,13Z,15E,19Z)-docosahexaenoate + glutathione disulfide + H2O. In terms of biological role, catalyzes the reduction of hydroperoxides in a glutathione-dependent manner thus regulating cellular redox homeostasis. Can reduce small soluble hydroperoxides such as H2O2, cumene hydroperoxide and tert-butyl hydroperoxide, as well as several fatty acid-derived hydroperoxides. In platelets catalyzes the reduction of 12-hydroperoxyeicosatetraenoic acid, the primary product of the arachidonate 12-lipoxygenase pathway. This chain is Glutathione peroxidase 1 (GPX1), found in Oryctolagus cuniculus (Rabbit).